Consider the following 215-residue polypeptide: Ribulose-phosphate 3-epimerase (215 aa).

Ser13 is a substrate binding site. Residues His38, Asp40, His69, and Asp175 each coordinate a divalent metal cation. The active-site Proton acceptor is Asp40. Residues His69, 175-177 (DGG), and 196-197 (GS) each bind substrate. The active-site Proton donor is the Asp175.

The protein belongs to the ribulose-phosphate 3-epimerase family. A divalent metal cation serves as cofactor.

It catalyses the reaction D-ribulose 5-phosphate = D-xylulose 5-phosphate. The protein operates within carbohydrate degradation. In terms of biological role, catalyzes the reversible epimerization of D-ribulose 5-phosphate to D-xylulose 5-phosphate. The chain is Ribulose-phosphate 3-epimerase from Mycoplasma pneumoniae (strain ATCC 29342 / M129 / Subtype 1) (Mycoplasmoides pneumoniae).